We begin with the raw amino-acid sequence, 259 residues long: Methionine aminopeptidase (259 aa).

Residue H78 participates in substrate binding. The a divalent metal cation site is built by D95, D106, and H169. H176 serves as a coordination point for substrate. Residue E202 coordinates a divalent metal cation. Substrate is bound at residue W220. Residue E234 coordinates a divalent metal cation.

This sequence belongs to the peptidase M24A family. Methionine aminopeptidase type 1 subfamily. Monomer. Co(2+) is required as a cofactor. The cofactor is Zn(2+). Requires Mn(2+) as cofactor. Fe(2+) serves as cofactor.

The catalysed reaction is Release of N-terminal amino acids, preferentially methionine, from peptides and arylamides.. Its function is as follows. Removes the N-terminal methionine from nascent proteins. The N-terminal methionine is often cleaved when the second residue in the primary sequence is small and uncharged (Met-Ala-, Cys, Gly, Pro, Ser, Thr, or Val). Requires deformylation of the N(alpha)-formylated initiator methionine before it can be hydrolyzed. This Rickettsia prowazekii (strain Madrid E) protein is Methionine aminopeptidase.